Consider the following 560-residue polypeptide: Oxygen-dependent choline dehydrogenase (560 aa).

An FAD-binding site is contributed by 6-35 (DYIIVGAGSAGCVLADRLSESGDHSVLLLE). The active-site Proton acceptor is H470.

Belongs to the GMC oxidoreductase family. FAD serves as cofactor.

It catalyses the reaction choline + A = betaine aldehyde + AH2. The catalysed reaction is betaine aldehyde + NAD(+) + H2O = glycine betaine + NADH + 2 H(+). The protein operates within amine and polyamine biosynthesis; betaine biosynthesis via choline pathway; betaine aldehyde from choline (cytochrome c reductase route): step 1/1. Its function is as follows. Involved in the biosynthesis of the osmoprotectant glycine betaine. Catalyzes the oxidation of choline to betaine aldehyde and betaine aldehyde to glycine betaine at the same rate. The protein is Oxygen-dependent choline dehydrogenase of Vibrio vulnificus (strain YJ016).